Consider the following 368-residue polypeptide: Germination protease (368 aa).

Positions 1 to 16 (MKNNELDVNQFLIRTD) are excised as a propeptide.

Belongs to the peptidase A25 family. In terms of assembly, homotetramer. Post-translationally, autoproteolytically processed. The inactive tetrameric zymogen termed p46 autoprocesses to a smaller form termed p41, which is active only during spore germination.

The enzyme catalyses Endopeptidase action with P4 Glu or Asp, P1 preferably Glu &gt; Asp, P1' hydrophobic and P2' Ala.. Initiates the rapid degradation of small, acid-soluble proteins during spore germination. This is Germination protease from Bacillus velezensis (strain DSM 23117 / BGSC 10A6 / LMG 26770 / FZB42) (Bacillus amyloliquefaciens subsp. plantarum).